We begin with the raw amino-acid sequence, 127 residues long: Movement protein TGB2 (127 aa).

The Cytoplasmic portion of the chain corresponds to 1-24 (MSLSHGTGAPAISTPLTLRPPPDN). A helical membrane pass occupies residues 25 to 45 (TKAILTIAIGIAASLVFFMLT). At 46-85 (RNNLPHVGDNIHSLPHGGSYIDGTKSINYRPPASRYPSSN) the chain is on the lumenal side. A helical transmembrane segment spans residues 86 to 106 (LLAFAPPILAAVLFFLTQPYL). The Cytoplasmic segment spans residues 107-127 (ATRRSRCVRCFVVHGACTNHT).

The protein belongs to the Tymovirales TGBp2 protein family.

Its subcellular location is the host endoplasmic reticulum membrane. Functionally, plays a role in viral cell-to-cell propagation, by facilitating genome transport to neighboring plant cells through plasmosdesmata,. The chain is Movement protein TGB2 from Setaria italica (Foxtail millet).